A 275-amino-acid chain; its full sequence is NH(3)-dependent NAD(+) synthetase (275 aa).

Gly47–Ser54 contributes to the ATP binding site. Asp53 is a Mg(2+) binding site. Residue Arg139 coordinates deamido-NAD(+). Thr159 contributes to the ATP binding site. Position 164 (Glu164) interacts with Mg(2+). Positions 172 and 179 each coordinate deamido-NAD(+). ATP contacts are provided by Lys188 and Thr210. His259–Lys260 is a binding site for deamido-NAD(+).

The protein belongs to the NAD synthetase family. In terms of assembly, homodimer.

It carries out the reaction deamido-NAD(+) + NH4(+) + ATP = AMP + diphosphate + NAD(+) + H(+). Its pathway is cofactor biosynthesis; NAD(+) biosynthesis; NAD(+) from deamido-NAD(+) (ammonia route): step 1/1. In terms of biological role, catalyzes the ATP-dependent amidation of deamido-NAD to form NAD. Uses ammonia as a nitrogen source. This chain is NH(3)-dependent NAD(+) synthetase, found in Staphylococcus epidermidis (strain ATCC 35984 / DSM 28319 / BCRC 17069 / CCUG 31568 / BM 3577 / RP62A).